A 630-amino-acid chain; its full sequence is tRNA uridine 5-carboxymethylaminomethyl modification enzyme MnmG (630 aa).

13 to 18 (GGGHAG) contributes to the FAD binding site. 273 to 287 (GPRYCPSIEDKVNRF) serves as a coordination point for NAD(+).

The protein belongs to the MnmG family. As to quaternary structure, homodimer. Heterotetramer of two MnmE and two MnmG subunits. FAD serves as cofactor.

Its subcellular location is the cytoplasm. NAD-binding protein involved in the addition of a carboxymethylaminomethyl (cmnm) group at the wobble position (U34) of certain tRNAs, forming tRNA-cmnm(5)s(2)U34. The sequence is that of tRNA uridine 5-carboxymethylaminomethyl modification enzyme MnmG from Saccharophagus degradans (strain 2-40 / ATCC 43961 / DSM 17024).